Here is a 291-residue protein sequence, read N- to C-terminus: Small ribosomal subunit protein uS2 (291 aa).

This sequence belongs to the universal ribosomal protein uS2 family.

The sequence is that of Small ribosomal subunit protein uS2 from Orientia tsutsugamushi (strain Boryong) (Rickettsia tsutsugamushi).